Reading from the N-terminus, the 491-residue chain is Cytosolic Fe-S cluster assembly factor NAR1 (491 aa).

[4Fe-4S] cluster contacts are provided by Cys20, Cys59, Cys62, Cys65, Cys177, Cys231, Cys412, and Cys416.

Belongs to the NARF family. As to quaternary structure, interacts with CIA1.

In terms of biological role, component of the cytosolic Fe/S protein assembly machinery. Required for maturation of extramitochondrial Fe/S proteins. May play a role in the transfer of pre-assembled Fe/S clusters to target apoproteins. The sequence is that of Cytosolic Fe-S cluster assembly factor NAR1 (NAR1) from Saccharomyces cerevisiae (strain YJM789) (Baker's yeast).